The sequence spans 268 residues: Interleukin-1 beta (268 aa).

A propeptide spanning residues 1–116 (MATVPELNCE…WDDDDLLVCD (116 aa)) is cleaved from the precursor.

Belongs to the IL-1 family. In terms of assembly, monomer. In its precursor form, weakly interacts with full-length MEFV; the mature cytokine does not interact at all. Interacts with integrins ITGAV:ITGBV and ITGA5:ITGB1; integrin-binding is required for IL1B signaling. Interacts with cargo receptor TMED10; the interaction is direct and is required for the secretion of IL1B mature form. Interacts with HSP90AB1; the interaction facilitates cargo translocation into the ERGIC. Interacts with HSP90B1; the interaction facilitates cargo translocation into the ERGIC.

Its subcellular location is the cytoplasm. The protein localises to the cytosol. It localises to the secreted. The protein resides in the lysosome. It is found in the extracellular exosome. Functionally, potent pro-inflammatory cytokine. Initially discovered as the major endogenous pyrogen, induces prostaglandin synthesis, neutrophil influx and activation, T-cell activation and cytokine production, B-cell activation and antibody production, and fibroblast proliferation and collagen production. Promotes Th17 differentiation of T-cells. Synergizes with IL12/interleukin-12 to induce IFNG synthesis from T-helper 1 (Th1) cells. Plays a role in angiogenesis by inducing VEGF production synergistically with TNF and IL6. Involved in transduction of inflammation downstream of pyroptosis: its mature form is specifically released in the extracellular milieu by passing through the gasdermin-D (GSDMD) pore. The chain is Interleukin-1 beta from Rattus norvegicus (Rat).